The following is a 352-amino-acid chain: Protein NDRG4 (352 aa).

4 positions are modified to phosphoserine: lysine 293, serine 298, serine 317, and serine 323. Positions 301 to 352 (AVPSASMTRLARSRTASLTSASSVDGSRPQPCAHSDSSEGMGQVNHTMEVSC) are disordered. The segment covering 308-323 (TRLARSRTASLTSASS) has biased composition (low complexity). Positions 338-352 (SEGMGQVNHTMEVSC) are enriched in polar residues.

The protein belongs to the NDRG family. As to expression, predominantly expressed in the brain (at protein level). Detected in neurons of various parts of brain, including the olfactory bulb, olfactory tuberculum, cerebral cortex, striatum, hippocampus, dentate gyrus, thalamus, hypothalamus, mesencephalon, cerebellum, pons and medulla oblongata.

It localises to the cytoplasm. The protein resides in the cytosol. Contributes to the maintenance of intracerebral BDNF levels within the normal range, which is necessary for the preservation of spatial learning and the resistance to neuronal cell death caused by ischemic stress. May enhance growth factor-induced ERK1 and ERK2 phosphorylation. May attenuate NGF-promoted ELK1 phosphorylation in a microtubule-dependent manner. This is Protein NDRG4 (Ndrg4) from Mus musculus (Mouse).